The sequence spans 111 residues: Ribonuclease P protein component (111 aa).

Belongs to the RnpA family. As to quaternary structure, consists of a catalytic RNA component (M1 or rnpB) and a protein subunit.

The enzyme catalyses Endonucleolytic cleavage of RNA, removing 5'-extranucleotides from tRNA precursor.. Functionally, RNaseP catalyzes the removal of the 5'-leader sequence from pre-tRNA to produce the mature 5'-terminus. It can also cleave other RNA substrates such as 4.5S RNA. The protein component plays an auxiliary but essential role in vivo by binding to the 5'-leader sequence and broadening the substrate specificity of the ribozyme. This chain is Ribonuclease P protein component, found in Clostridium botulinum (strain Okra / Type B1).